The following is a 134-amino-acid chain: Large ribosomal subunit protein eL32 (134 aa).

Belongs to the eukaryotic ribosomal protein eL32 family.

In Drosophila melanogaster (Fruit fly), this protein is Large ribosomal subunit protein eL32 (RpL32).